The primary structure comprises 277 residues: Shikimate dehydrogenase (NADP(+)) (277 aa).

Shikimate contacts are provided by residues S15–S17 and T62. K66 (proton acceptor) is an active-site residue. Shikimate is bound by residues N87 and D102. NADP(+) contacts are provided by residues G127–A131, N151–K156, and I219. Y221 contacts shikimate. G242 lines the NADP(+) pocket.

It belongs to the shikimate dehydrogenase family. As to quaternary structure, homodimer.

It catalyses the reaction shikimate + NADP(+) = 3-dehydroshikimate + NADPH + H(+). The protein operates within metabolic intermediate biosynthesis; chorismate biosynthesis; chorismate from D-erythrose 4-phosphate and phosphoenolpyruvate: step 4/7. In terms of biological role, involved in the biosynthesis of the chorismate, which leads to the biosynthesis of aromatic amino acids. Catalyzes the reversible NADPH linked reduction of 3-dehydroshikimate (DHSA) to yield shikimate (SA). The polypeptide is Shikimate dehydrogenase (NADP(+)) (Bacillus cereus (strain AH187)).